Reading from the N-terminus, the 388-residue chain is Valine--pyruvate aminotransferase (388 aa).

Residue Lys-234 is modified to N6-(pyridoxal phosphate)lysine.

This sequence belongs to the class-I pyridoxal-phosphate-dependent aminotransferase family. Requires pyridoxal 5'-phosphate as cofactor.

It catalyses the reaction L-valine + pyruvate = 3-methyl-2-oxobutanoate + L-alanine. The polypeptide is Valine--pyruvate aminotransferase (Mycobacterium tuberculosis (strain ATCC 25618 / H37Rv)).